The following is a 711-amino-acid chain: Polyribonucleotide nucleotidyltransferase (711 aa).

Positions 486 and 492 each coordinate Mg(2+). Positions 553–612 constitute a KH domain; the sequence is PRIHTIKISPDKIKDVIGKGGSVIRALTEETGTTIEIEDDGTVKIAATDGEKAKFAIRRI. One can recognise an S1 motif domain in the interval 622 to 690; the sequence is GRIYNGKVTR…RQGRVRLSIK (69 aa). The disordered stretch occupies residues 690–711; the sequence is KEATEQTQPAAAPEAPAAEQGE. Residues 694-711 show a composition bias toward low complexity; that stretch reads EQTQPAAAPEAPAAEQGE.

The protein belongs to the polyribonucleotide nucleotidyltransferase family. In terms of assembly, component of the RNA degradosome, which is a multiprotein complex involved in RNA processing and mRNA degradation. Requires Mg(2+) as cofactor.

Its subcellular location is the cytoplasm. The enzyme catalyses RNA(n+1) + phosphate = RNA(n) + a ribonucleoside 5'-diphosphate. In terms of biological role, involved in mRNA degradation. Catalyzes the phosphorolysis of single-stranded polyribonucleotides processively in the 3'- to 5'-direction. This Enterobacter sp. (strain 638) protein is Polyribonucleotide nucleotidyltransferase.